The chain runs to 274 residues: Small ribosomal subunit protein uS2 (274 aa).

Residues 255 to 274 are disordered; sequence AEAESEDKGEVLYSFDDEEE.

The protein belongs to the universal ribosomal protein uS2 family.

The sequence is that of Small ribosomal subunit protein uS2 from Gloeobacter violaceus (strain ATCC 29082 / PCC 7421).